The primary structure comprises 869 residues: Leucine--tRNA ligase (869 aa).

The 'HIGH' region signature appears at 42–52; that stretch reads PYPSGRLHMGH. The 'KMSKS' region motif lies at 620–624; it reads KMSKS. An ATP-binding site is contributed by Lys623.

The protein belongs to the class-I aminoacyl-tRNA synthetase family.

The protein localises to the cytoplasm. It catalyses the reaction tRNA(Leu) + L-leucine + ATP = L-leucyl-tRNA(Leu) + AMP + diphosphate. The polypeptide is Leucine--tRNA ligase (Hamiltonella defensa subsp. Acyrthosiphon pisum (strain 5AT)).